A 453-amino-acid chain; its full sequence is Putative ABC transporter ATP-binding protein MM_0462 (453 aa).

One can recognise an ABC transporter domain in the interval 4-239 (LETRSLKYSY…QELLKKVGLR (236 aa)). 37 to 44 (GQNGSGKS) is a binding site for ATP.

Belongs to the ABC transporter superfamily.

Its subcellular location is the cell membrane. Probably part of an ABC transporter complex. Responsible for energy coupling to the transport system. This is Putative ABC transporter ATP-binding protein MM_0462 from Methanosarcina mazei (strain ATCC BAA-159 / DSM 3647 / Goe1 / Go1 / JCM 11833 / OCM 88) (Methanosarcina frisia).